The chain runs to 375 residues: Methylthioribose-1-phosphate isomerase (375 aa).

Asp257 acts as the Proton donor in catalysis.

The protein belongs to the eIF-2B alpha/beta/delta subunits family. MtnA subfamily.

The protein resides in the cytoplasm. It localises to the nucleus. The enzyme catalyses 5-(methylsulfanyl)-alpha-D-ribose 1-phosphate = 5-(methylsulfanyl)-D-ribulose 1-phosphate. The protein operates within amino-acid biosynthesis; L-methionine biosynthesis via salvage pathway; L-methionine from S-methyl-5-thio-alpha-D-ribose 1-phosphate: step 1/6. Its function is as follows. Catalyzes the interconversion of methylthioribose-1-phosphate (MTR-1-P) into methylthioribulose-1-phosphate (MTRu-1-P). The polypeptide is Methylthioribose-1-phosphate isomerase (Leishmania major).